Reading from the N-terminus, the 338-residue chain is Taste receptor type 2 member 39 (338 aa).

Topologically, residues 1–30 (MLGRCFPPNTKEKQQLRMIKLCDPAESELS) are extracellular. The helical transmembrane segment at 31-51 (PFLITLTLAVLLAEYLTGIIA) threads the bilayer. At 52–74 (NGFITAIHAAEWVQNKSVSTSGR) the chain is on the cytoplasmic side. A helical membrane pass occupies residues 75 to 95 (ILVFLSVSRIALQSLMMLEIT). Over 96–116 (ISSTSLSFYSEDAVYYAFKIS) the chain is Extracellular. A helical transmembrane segment spans residues 117 to 137 (FIFLNFCSLWFAAWLSFFYFV). Residues 138 to 156 (KIANFSYPLFLKLRWRISG) lie on the Cytoplasmic side of the membrane. A helical membrane pass occupies residues 157–177 (LIPWLLWLSVFISFSHSMFCI). The Extracellular portion of the chain corresponds to 178–205 (NICTGYCDNSFPIHSSNSTEKTYFSEIS). Asparagine 194 carries an N-linked (GlcNAc...) asparagine glycan. The chain crosses the membrane as a helical span at residues 206–226 (VVSLAFFFNLGIVIPLIMFIL). Residues 227–262 (AAILLILSLKRHTLHMGSNATGSKDPSMEAHIGAIK) lie on the Cytoplasmic side of the membrane. The chain crosses the membrane as a helical span at residues 263 to 283 (ATSYFLILYIFNAVALFIYLS). At 284-291 (NMFDINSL) the chain is on the extracellular side. The helical transmembrane segment at 292 to 312 (WNTLCQIIMAAYPASHSILLI) threads the bilayer. Topologically, residues 313–338 (KDNPGLRRAWKQLQHRLHLYPKQWTL) are cytoplasmic.

It belongs to the G-protein coupled receptor T2R family.

It localises to the membrane. Its function is as follows. Receptor that may play a role in the perception of bitterness and is gustducin-linked. May play a role in sensing the chemical composition of the gastrointestinal content. The activity of this receptor may stimulate alpha gustducin, mediate PLC-beta-2 activation and lead to the gating of TRPM5. This Macaca mulatta (Rhesus macaque) protein is Taste receptor type 2 member 39 (TAS2R39).